We begin with the raw amino-acid sequence, 242 residues long: Probable transcriptional regulatory protein NMB1648 (242 aa).

This sequence belongs to the TACO1 family.

The protein resides in the cytoplasm. In Neisseria meningitidis serogroup B (strain ATCC BAA-335 / MC58), this protein is Probable transcriptional regulatory protein NMB1648.